The following is a 639-amino-acid chain: Poly(A)-specific ribonuclease PARN (639 aa).

The a divalent metal cation site is built by Asp28 and Glu30. Residues Ser163 and Ser167 each carry the phosphoserine modification. One can recognise an R3H domain in the interval 178-245 (KKFIDQVVEK…ERYIVISKVD (68 aa)). Lys220 bears the N6-acetyllysine mark. Residues Asp292 and Asp382 each coordinate a divalent metal cation. At Lys499 the chain carries N6-acetyllysine. Phosphoserine is present on Ser530. At Ser557 the chain carries Phosphoserine; by MAPKAPK2. The tract at residues 563 to 611 (TVGKRNLSPSQEEAGLEDGVSGEISDTELEQTDSCAEPLSEGRKKAKKL) is disordered. 5 positions are modified to phosphoserine: Ser583, Ser587, Ser619, Ser623, and Ser628. Position 631 is a phosphothreonine (Thr631).

It belongs to the CAF1 family. As to quaternary structure, homodimer. Found in a mRNA decay complex with RENT1, RENT2 and RENT3B. Interacts with KHSRP. Interacts with CELF1/CUGBP1. Interacts with ZC3HAV1 in an RNA-independent manner. Interacts with DHX36. Requires Mg(2+) as cofactor. Phosphorylation by MAPKAPK2, preventing GADD45A mRNA degradation after genotoxic stress.

It localises to the nucleus. It is found in the cytoplasm. The protein resides in the nucleolus. It catalyses the reaction Exonucleolytic cleavage of poly(A) to 5'-AMP.. Its function is as follows. 3'-exoribonuclease that has a preference for poly(A) tails of mRNAs, thereby efficiently degrading poly(A) tails. Exonucleolytic degradation of the poly(A) tail is often the first step in the decay of eukaryotic mRNAs and is also used to silence certain maternal mRNAs translationally during oocyte maturation and early embryonic development. Interacts with both the 3'-end poly(A) tail and the 5'-end cap structure during degradation, the interaction with the cap structure being required for an efficient degradation of poly(A) tails. Involved in nonsense-mediated mRNA decay, a critical process of selective degradation of mRNAs that contain premature stop codons. Also involved in degradation of inherently unstable mRNAs that contain AU-rich elements (AREs) in their 3'-UTR, possibly via its interaction with KHSRP. Probably mediates the removal of poly(A) tails of AREs mRNAs, which constitutes the first step of destabilization. Also able to recognize poly(A) tails of microRNAs such as MIR21 and H/ACA box snoRNAs (small nucleolar RNAs) leading to microRNAs degradation or snoRNA increased stability. This chain is Poly(A)-specific ribonuclease PARN (PARN), found in Pongo abelii (Sumatran orangutan).